The following is a 219-amino-acid chain: 7-cyano-7-deazaguanine synthase (219 aa).

10–20 (FSGGQDSTTCL) provides a ligand contact to ATP. 4 residues coordinate Zn(2+): Cys-186, Cys-195, Cys-198, and Cys-201.

It belongs to the QueC family. In terms of assembly, homodimer. The cofactor is Zn(2+).

It catalyses the reaction 7-carboxy-7-deazaguanine + NH4(+) + ATP = 7-cyano-7-deazaguanine + ADP + phosphate + H2O + H(+). Its pathway is purine metabolism; 7-cyano-7-deazaguanine biosynthesis. Functionally, catalyzes the ATP-dependent conversion of 7-carboxy-7-deazaguanine (CDG) to 7-cyano-7-deazaguanine (preQ(0)). The chain is 7-cyano-7-deazaguanine synthase from Bacillus velezensis (strain DSM 23117 / BGSC 10A6 / LMG 26770 / FZB42) (Bacillus amyloliquefaciens subsp. plantarum).